Consider the following 83-residue polypeptide: Cytochrome b559 subunit alpha (83 aa).

Residues 21-35 (VIHSITIPSLFIAGW) form a helical membrane-spanning segment. Heme is bound at residue H23.

This sequence belongs to the PsbE/PsbF family. In terms of assembly, heterodimer of an alpha subunit and a beta subunit. PSII is composed of 1 copy each of membrane proteins PsbA, PsbB, PsbC, PsbD, PsbE, PsbF, PsbH, PsbI, PsbJ, PsbK, PsbL, PsbM, PsbT, PsbX, PsbY, PsbZ, Psb30/Ycf12, at least 3 peripheral proteins of the oxygen-evolving complex and a large number of cofactors. It forms dimeric complexes. It depends on heme b as a cofactor.

The protein localises to the plastid. It localises to the chloroplast thylakoid membrane. Functionally, this b-type cytochrome is tightly associated with the reaction center of photosystem II (PSII). PSII is a light-driven water:plastoquinone oxidoreductase that uses light energy to abstract electrons from H(2)O, generating O(2) and a proton gradient subsequently used for ATP formation. It consists of a core antenna complex that captures photons, and an electron transfer chain that converts photonic excitation into a charge separation. The chain is Cytochrome b559 subunit alpha from Huperzia lucidula (Shining clubmoss).